We begin with the raw amino-acid sequence, 457 residues long: ATP synthase subunit beta (457 aa).

147-154 (GGAGVGKT) lines the ATP pocket.

Belongs to the ATPase alpha/beta chains family. In terms of assembly, F-type ATPases have 2 components, CF(1) - the catalytic core - and CF(0) - the membrane proton channel. CF(1) has five subunits: alpha(3), beta(3), gamma(1), delta(1), epsilon(1). CF(0) has three main subunits: a(1), b(2) and c(9-12). The alpha and beta chains form an alternating ring which encloses part of the gamma chain. CF(1) is attached to CF(0) by a central stalk formed by the gamma and epsilon chains, while a peripheral stalk is formed by the delta and b chains.

Its subcellular location is the cell inner membrane. The catalysed reaction is ATP + H2O + 4 H(+)(in) = ADP + phosphate + 5 H(+)(out). Its function is as follows. Produces ATP from ADP in the presence of a proton gradient across the membrane. The catalytic sites are hosted primarily by the beta subunits. The protein is ATP synthase subunit beta of Haemophilus ducreyi (strain 35000HP / ATCC 700724).